Here is a 677-residue protein sequence, read N- to C-terminus: Histidine ammonia-lyase (677 aa).

The segment at residues C269–G271 is a cross-link (5-imidazolinone (Cys-Gly)). A 2,3-didehydroalanine (Ser) modification is found at S270.

The protein belongs to the PAL/histidase family. Contains an active site 4-methylidene-imidazol-5-one (MIO), which is formed autocatalytically by cyclization and dehydration of residues Cys-Ser-Gly.

It carries out the reaction L-histidine = trans-urocanate + NH4(+). It functions in the pathway amino-acid degradation; L-histidine degradation into L-glutamate; N-formimidoyl-L-glutamate from L-histidine: step 1/3. The protein is Histidine ammonia-lyase of Caenorhabditis elegans.